A 91-amino-acid polypeptide reads, in one-letter code: Non-specific lipid-transfer protein P5 (91 aa).

4 disulfides stabilise this stretch: Cys3–Cys50, Cys13–Cys27, Cys28–Cys73, and Cys48–Cys87.

It is found in the secreted. Plant non-specific lipid-transfer proteins transfer phospholipids as well as galactolipids across membranes. May play a role in wax or cutin deposition in the cell walls of expanding epidermal cells and certain secretory tissues. The chain is Non-specific lipid-transfer protein P5 from Vitis sp. (Grape).